Here is a 24-residue protein sequence, read N- to C-terminus: L-amino-acid oxidase (24 aa).

This sequence belongs to the flavin monoamine oxidase family. FIG1 subfamily. In terms of assembly, homodimer; non-covalently linked. FAD serves as cofactor. In terms of processing, N-glycosylated. Expressed by the venom gland.

Its subcellular location is the secreted. The enzyme catalyses an L-alpha-amino acid + O2 + H2O = a 2-oxocarboxylate + H2O2 + NH4(+). In terms of biological role, catalyzes an oxidative deamination of predominantly hydrophobic and aromatic L-amino acids, thus producing hydrogen peroxide that may contribute to the diverse toxic effects of this enzyme. Exhibits diverse biological activities, such as hemorrhage, hemolysis, edema, apoptosis, and antiparasitic activities. This protein has antibacterial activity (against E.coli, S.aureus, and B.dysenteriae), cytotoxic activity, as well as an ability to induce platelet aggregation. Effects of snake L-amino oxidases on platelets are controversial, since they either induce aggregation or inhibit agonist-induced aggregation. These different effects are probably due to different experimental conditions. This is L-amino-acid oxidase from Protobothrops mucrosquamatus (Taiwan habu).